The following is a 501-amino-acid chain: Cytochrome P450 3A6 (501 aa).

Position 440 (Cys-440) interacts with heme.

It belongs to the cytochrome P450 family. Heme serves as cofactor.

It is found in the endoplasmic reticulum membrane. The protein localises to the microsome membrane. The enzyme catalyses an organic molecule + reduced [NADPH--hemoprotein reductase] + O2 = an alcohol + oxidized [NADPH--hemoprotein reductase] + H2O + H(+). Functionally, exhibits progesterone 6 beta-hydroxylase activity. The protein is Cytochrome P450 3A6 (CYP3A6) of Oryctolagus cuniculus (Rabbit).